The following is a 540-amino-acid chain: Glucose-6-phosphate isomerase (540 aa).

The active-site Proton donor is glutamate 351. Catalysis depends on residues histidine 382 and lysine 506.

This sequence belongs to the GPI family.

It is found in the cytoplasm. It carries out the reaction alpha-D-glucose 6-phosphate = beta-D-fructose 6-phosphate. Its pathway is carbohydrate biosynthesis; gluconeogenesis. The protein operates within carbohydrate degradation; glycolysis; D-glyceraldehyde 3-phosphate and glycerone phosphate from D-glucose: step 2/4. Catalyzes the reversible isomerization of glucose-6-phosphate to fructose-6-phosphate. The sequence is that of Glucose-6-phosphate isomerase from Corynebacterium glutamicum (strain ATCC 13032 / DSM 20300 / JCM 1318 / BCRC 11384 / CCUG 27702 / LMG 3730 / NBRC 12168 / NCIMB 10025 / NRRL B-2784 / 534).